The chain runs to 195 residues: Peptidyl-tRNA hydrolase (195 aa).

Tyr-17 provides a ligand contact to tRNA. His-22 serves as the catalytic Proton acceptor. Phe-68, Asn-70, and Asn-116 together coordinate tRNA.

Belongs to the PTH family. Monomer.

It localises to the cytoplasm. It carries out the reaction an N-acyl-L-alpha-aminoacyl-tRNA + H2O = an N-acyl-L-amino acid + a tRNA + H(+). Functionally, hydrolyzes ribosome-free peptidyl-tRNAs (with 1 or more amino acids incorporated), which drop off the ribosome during protein synthesis, or as a result of ribosome stalling. Its function is as follows. Catalyzes the release of premature peptidyl moieties from peptidyl-tRNA molecules trapped in stalled 50S ribosomal subunits, and thus maintains levels of free tRNAs and 50S ribosomes. The sequence is that of Peptidyl-tRNA hydrolase from Shewanella amazonensis (strain ATCC BAA-1098 / SB2B).